Here is an 81-residue protein sequence, read N- to C-terminus: N.vectensis toxin 4 (81 aa).

Residues 1-20 (MRSSWMFVICFAMLILYTNG) form the signal peptide. 3 disulfide bridges follow: C46–C75, C48–C70, and C63–C76.

As to expression, expressed in ectodermal gland cells. In adult female tissues, highly transcribed in mesenteries (gametes-producing tissue) and slightly transcribed in tentacles, pharynx and physa.

In terms of biological role, has toxic effects on zebrafish larvae. It causes contractile paralysis and twitching of the tail within 30 minutes, followed by death within 40 minutes. Does not show any toxicity when injected into arthropods (cherry shrimps or grass shrimps). This chain is N.vectensis toxin 4, found in Nematostella vectensis (Starlet sea anemone).